Here is a 102-residue protein sequence, read N- to C-terminus: Envelope glycoprotein N (102 aa).

An N-terminal signal peptide occupies residues Met-1–Ala-32. The Virion surface segment spans residues Ser-33–Ser-69. Residues Ile-70 to Val-90 traverse the membrane as a helical segment. Over Cys-91 to Asp-102 the chain is Intravirion.

Belongs to the herpesviridae glycoprotein N family. In terms of assembly, interacts (via N-terminus) with gM (via N-terminus). The gM-gN heterodimer forms the gCII complex. Post-translationally, O-glycosylated. Contains alpha 2,6-sialic acid residues.

The protein localises to the virion membrane. It localises to the host membrane. The protein resides in the host Golgi apparatus. It is found in the host trans-Golgi network. Its function is as follows. Envelope glycoprotein necessary for proper maturation of gM and modulation of its membrane fusion activity. Also plays a critical role in virion morphogenesis. The protein is Envelope glycoprotein N of Epstein-Barr virus (strain AG876) (HHV-4).